We begin with the raw amino-acid sequence, 31 residues long: Kalata-B9 (31 aa).

Residues 1–31 (GSVFNCGETCVLGTCYTPGCTCNTYRVCTKD) constitute a cross-link (cyclopeptide (Gly-Asp)). 3 disulfides stabilise this stretch: cysteine 6–cysteine 20, cysteine 10–cysteine 22, and cysteine 15–cysteine 28.

It belongs to the cyclotide family. Bracelet subfamily. This peptide occurs in both cyclic and linear forms.

In terms of biological role, probably participates in a plant defense mechanism. This Oldenlandia affinis protein is Kalata-B9.